The following is a 473-amino-acid chain: 3-isopropylmalate dehydratase large subunit 2 (473 aa).

[4Fe-4S] cluster contacts are provided by Cys350, Cys410, and Cys413.

Belongs to the aconitase/IPM isomerase family. LeuC type 1 subfamily. Heterodimer of LeuC and LeuD. [4Fe-4S] cluster serves as cofactor.

The catalysed reaction is (2R,3S)-3-isopropylmalate = (2S)-2-isopropylmalate. It functions in the pathway amino-acid biosynthesis; L-leucine biosynthesis; L-leucine from 3-methyl-2-oxobutanoate: step 2/4. Functionally, catalyzes the isomerization between 2-isopropylmalate and 3-isopropylmalate, via the formation of 2-isopropylmaleate. This Salmonella typhimurium (strain LT2 / SGSC1412 / ATCC 700720) protein is 3-isopropylmalate dehydratase large subunit 2.